The following is a 147-amino-acid chain: Nucleoside diphosphate kinase (147 aa).

Lysine 9, phenylalanine 57, arginine 85, threonine 91, arginine 102, and asparagine 112 together coordinate ATP. At threonine 91 the chain carries Phosphothreonine. Residue histidine 115 is the Pros-phosphohistidine intermediate of the active site. Serine 122 is subject to Phosphoserine.

This sequence belongs to the NDK family. As to quaternary structure, homotetramer. Requires Mg(2+) as cofactor.

It localises to the cytoplasm. The enzyme catalyses a 2'-deoxyribonucleoside 5'-diphosphate + ATP = a 2'-deoxyribonucleoside 5'-triphosphate + ADP. The catalysed reaction is a ribonucleoside 5'-diphosphate + ATP = a ribonucleoside 5'-triphosphate + ADP. Its function is as follows. Major role in the synthesis of nucleoside triphosphates other than ATP. The ATP gamma phosphate is transferred to the NDP beta phosphate via a ping-pong mechanism, using a phosphorylated active-site intermediate. This Halalkalibacterium halodurans (strain ATCC BAA-125 / DSM 18197 / FERM 7344 / JCM 9153 / C-125) (Bacillus halodurans) protein is Nucleoside diphosphate kinase.